The following is a 208-amino-acid chain: Large ribosomal subunit protein bL25 (208 aa).

It belongs to the bacterial ribosomal protein bL25 family. CTC subfamily. Part of the 50S ribosomal subunit; part of the 5S rRNA/L5/L18/L25 subcomplex. Contacts the 5S rRNA. Binds to the 5S rRNA independently of L5 and L18.

In terms of biological role, this is one of the proteins that binds to the 5S RNA in the ribosome where it forms part of the central protuberance. The protein is Large ribosomal subunit protein bL25 of Bartonella quintana (strain Toulouse) (Rochalimaea quintana).